The chain runs to 159 residues: Ribosomal RNA large subunit methyltransferase H (159 aa).

S-adenosyl-L-methionine contacts are provided by residues Gly-108 and 127 to 132 (FGKLTM).

The protein belongs to the RNA methyltransferase RlmH family. In terms of assembly, homodimer.

Its subcellular location is the cytoplasm. It catalyses the reaction pseudouridine(1915) in 23S rRNA + S-adenosyl-L-methionine = N(3)-methylpseudouridine(1915) in 23S rRNA + S-adenosyl-L-homocysteine + H(+). Specifically methylates the pseudouridine at position 1915 (m3Psi1915) in 23S rRNA. This Lactobacillus helveticus (strain DPC 4571) protein is Ribosomal RNA large subunit methyltransferase H.